A 327-amino-acid polypeptide reads, in one-letter code: Sugar transporter ERD6-like 9 (327 aa).

Transmembrane regions (helical) follow at residues 26–46, 68–88, 102–122, 125–145, 152–172, 180–200, 260–280, and 295–315; these read FLVFTTFIIVSASFSFGVALG, VFGSLLTFGGMIGALFSATIA, VFCISGWLAIALAKNIIWLDL, FFVGIGVGLLSYVVPVYIAEI, GTFTFSNQLLQNCGVATAYYL, IIALIGILPCLIQLVGLFFVP, LTIGIGLMLLQQLSGSAGLGY, and IGMTVLSIVVVPKAILGLILV.

Belongs to the major facilitator superfamily. Sugar transporter (TC 2.A.1.1) family.

It localises to the membrane. In terms of biological role, sugar transporter. The polypeptide is Sugar transporter ERD6-like 9 (Arabidopsis thaliana (Mouse-ear cress)).